The primary structure comprises 529 residues: uncharacterized protein (529 aa).

ATP-binding positions include 178–186 (TSGTTGQPK), D401, R416, and K510.

It belongs to the ATP-dependent AMP-binding enzyme family.

This is an uncharacterized protein from Bacillus subtilis (strain 168).